A 482-amino-acid chain; its full sequence is Glutamyl-tRNA(Gln) amidotransferase subunit A (482 aa).

Residues K75 and S150 each act as charge relay system in the active site. The Acyl-ester intermediate role is filled by S174.

The protein belongs to the amidase family. GatA subfamily. As to quaternary structure, heterotrimer of A, B and C subunits.

The catalysed reaction is L-glutamyl-tRNA(Gln) + L-glutamine + ATP + H2O = L-glutaminyl-tRNA(Gln) + L-glutamate + ADP + phosphate + H(+). In terms of biological role, allows the formation of correctly charged Gln-tRNA(Gln) through the transamidation of misacylated Glu-tRNA(Gln) in organisms which lack glutaminyl-tRNA synthetase. The reaction takes place in the presence of glutamine and ATP through an activated gamma-phospho-Glu-tRNA(Gln). This is Glutamyl-tRNA(Gln) amidotransferase subunit A from Cyanothece sp. (strain PCC 7425 / ATCC 29141).